A 144-amino-acid polypeptide reads, in one-letter code: Mannitol-specific phosphotransferase enzyme IIA component (144 aa).

In terms of domain architecture, PTS EIIA type-2 spans 3–142 (ELFSNDNIFL…EEIKQVFEEA (140 aa)). The Tele-phosphohistidine intermediate role is filled by H63. A Phosphohistidine; by HPr modification is found at H63.

In terms of assembly, homodimer or homotrimer. Seems to be a monomer when not phosphorylated.

The protein localises to the cytoplasm. The phosphoenolpyruvate-dependent sugar phosphotransferase system (sugar PTS), a major carbohydrate active transport system, catalyzes the phosphorylation of incoming sugar substrates concomitantly with their translocation across the cell membrane. The enzyme II CmtAB PTS system is involved in D-mannitol transport. The polypeptide is Mannitol-specific phosphotransferase enzyme IIA component (mtlF) (Staphylococcus aureus (strain COL)).